The primary structure comprises 331 residues: Phosphoenolpyruvate transferase (331 aa).

Aspartate 63 provides a ligand contact to 7,8-didemethyl-8-hydroxy-5-deazariboflavin.

It belongs to the CofD family. In terms of assembly, homodimer. Mg(2+) is required as a cofactor.

It carries out the reaction enolpyruvoyl-2-diphospho-5'-guanosine + 7,8-didemethyl-8-hydroxy-5-deazariboflavin = dehydro coenzyme F420-0 + GMP + H(+). It functions in the pathway cofactor biosynthesis; coenzyme F420 biosynthesis. Catalyzes the transfer of the phosphoenolpyruvate moiety from enoylpyruvoyl-2-diphospho-5'-guanosine (EPPG) to 7,8-didemethyl-8-hydroxy-5-deazariboflavin (FO) with the formation of dehydro coenzyme F420-0 and GMP. This chain is Phosphoenolpyruvate transferase, found in Mycobacterium sp. (strain JLS).